A 575-amino-acid polypeptide reads, in one-letter code: Septation ring formation regulator EzrA (575 aa).

The Extracellular segment spans residues 1 to 8 (MSNGQLIY). A helical transmembrane segment spans residues 9–27 (LMVAIAVILVLAYVVAIFL). Topologically, residues 28–575 (RKRNEGRLEA…YEKTRETIRF (548 aa)) are cytoplasmic. Coiled-coil stretches lie at residues 110 to 191 (QIDQ…FVTL), 265 to 301 (LYEAFKKNQENIRQLELDNAEYENGQAQEEINALYDI), 354 to 416 (VRRI…IEKD), and 456 to 526 (TASN…IQEA).

The protein belongs to the EzrA family.

It is found in the cell membrane. Functionally, negative regulator of FtsZ ring formation; modulates the frequency and position of FtsZ ring formation. Inhibits FtsZ ring formation at polar sites. Interacts either with FtsZ or with one of its binding partners to promote depolymerization. The protein is Septation ring formation regulator EzrA of Streptococcus pneumoniae (strain JJA).